Reading from the N-terminus, the 313-residue chain is MNLKSKDLLGLRDISAEEIEYILNTAKTMKCIVTSNNKKTAHLQGKSIITLFYENSTRTRLSFELASKYMGASAANISASSSSVQKGETLIDTGKTIDSMGSDIIIMRHPMSGAPHLLAKNVKSSVINAGDGMNEHPTQALLDMFTILEKKGTLKGLKVAIIGDILHSRVARSNIWGLTKMGAEVNVAGPATLIPPEIEKIGVNVFSTVQEAMLDADVVMGLRIQLERQKKGLFPTIREYSRFFGVDDKRLKLAKEDAIVLHPGPVNRGVELSSSVTDGEQSFIDEQVTNGVAVRMALLYLLTRRGIVNEVTD.

Carbamoyl phosphate-binding residues include R58 and T59. K86 provides a ligand contact to L-aspartate. Carbamoyl phosphate-binding residues include R108, H136, and Q139. Residues R169 and R223 each contribute to the L-aspartate site. Residues G264 and P265 each contribute to the carbamoyl phosphate site.

Belongs to the aspartate/ornithine carbamoyltransferase superfamily. ATCase family. In terms of assembly, heterododecamer (2C3:3R2) of six catalytic PyrB chains organized as two trimers (C3), and six regulatory PyrI chains organized as three dimers (R2).

The enzyme catalyses carbamoyl phosphate + L-aspartate = N-carbamoyl-L-aspartate + phosphate + H(+). It functions in the pathway pyrimidine metabolism; UMP biosynthesis via de novo pathway; (S)-dihydroorotate from bicarbonate: step 2/3. Functionally, catalyzes the condensation of carbamoyl phosphate and aspartate to form carbamoyl aspartate and inorganic phosphate, the committed step in the de novo pyrimidine nucleotide biosynthesis pathway. In Ruminiclostridium cellulolyticum (strain ATCC 35319 / DSM 5812 / JCM 6584 / H10) (Clostridium cellulolyticum), this protein is Aspartate carbamoyltransferase catalytic subunit.